A 196-amino-acid polypeptide reads, in one-letter code: ATP-dependent Clp protease proteolytic subunit (196 aa).

The active-site Nucleophile is Ser96. The active site involves His121.

The protein belongs to the peptidase S14 family. As to quaternary structure, fourteen ClpP subunits assemble into 2 heptameric rings which stack back to back to give a disk-like structure with a central cavity, resembling the structure of eukaryotic proteasomes.

It is found in the cytoplasm. The catalysed reaction is Hydrolysis of proteins to small peptides in the presence of ATP and magnesium. alpha-casein is the usual test substrate. In the absence of ATP, only oligopeptides shorter than five residues are hydrolyzed (such as succinyl-Leu-Tyr-|-NHMec, and Leu-Tyr-Leu-|-Tyr-Trp, in which cleavage of the -Tyr-|-Leu- and -Tyr-|-Trp bonds also occurs).. Cleaves peptides in various proteins in a process that requires ATP hydrolysis. Has a chymotrypsin-like activity. Plays a major role in the degradation of misfolded proteins. The chain is ATP-dependent Clp protease proteolytic subunit from Streptococcus uberis (strain ATCC BAA-854 / 0140J).